Here is a 287-residue protein sequence, read N- to C-terminus: Ventral anterior homeobox 1b (287 aa).

The segment covering 1-33 (MFEKTRDMDVRCNIEENGRISKPKDNKEIRESQ) has biased composition (basic and acidic residues). The segment at 1–55 (MFEKTRDMDVRCNIEENGRISKPKDNKEIRESQSKMPSTYPAPGSSEGCAKNKSS) is disordered. A DNA-binding region (homeobox) is located at residues 89–148 (PKRTRTSFTAEQLYRLEMEFQRCQYVVGRERTELARQLNLSETQVKVWFQNRRTKQKKDQ).

The protein belongs to the EMX homeobox family.

The protein localises to the nucleus. Functionally, involved in ventral eye development. The sequence is that of Ventral anterior homeobox 1b (vax1-b) from Xenopus laevis (African clawed frog).